Here is a 395-residue protein sequence, read N- to C-terminus: uncharacterized protein (395 aa).

Residues Val288–Lys318 are a coiled coil.

This is an uncharacterized protein from Ostreid herpesvirus 1 (isolate France) (OsHV-1).